The following is a 271-amino-acid chain: Dermonecrotic toxin LarSicTox-alphaIB1c (271 aa).

The active site involves H3. Mg(2+) contacts are provided by E23 and D25. H39 (nucleophile) is an active-site residue. 2 cysteine pairs are disulfide-bonded: C43–C49 and C45–C188. D83 provides a ligand contact to Mg(2+). An N-linked (GlcNAc...) asparagine glycan is attached at N248.

The protein belongs to the arthropod phospholipase D family. Class II subfamily. Mg(2+) is required as a cofactor. As to expression, expressed by the venom gland.

Its subcellular location is the secreted. It catalyses the reaction an N-(acyl)-sphingosylphosphocholine = an N-(acyl)-sphingosyl-1,3-cyclic phosphate + choline. The catalysed reaction is an N-(acyl)-sphingosylphosphoethanolamine = an N-(acyl)-sphingosyl-1,3-cyclic phosphate + ethanolamine. It carries out the reaction a 1-acyl-sn-glycero-3-phosphocholine = a 1-acyl-sn-glycero-2,3-cyclic phosphate + choline. The enzyme catalyses a 1-acyl-sn-glycero-3-phosphoethanolamine = a 1-acyl-sn-glycero-2,3-cyclic phosphate + ethanolamine. Functionally, dermonecrotic toxins cleave the phosphodiester linkage between the phosphate and headgroup of certain phospholipids (sphingolipid and lysolipid substrates), forming an alcohol (often choline) and a cyclic phosphate. This toxin acts on sphingomyelin (SM). It may also act on ceramide phosphoethanolamine (CPE), lysophosphatidylcholine (LPC) and lysophosphatidylethanolamine (LPE), but not on lysophosphatidylserine (LPS), and lysophosphatidylglycerol (LPG). It acts by transphosphatidylation, releasing exclusively cyclic phosphate products as second products. Induces dermonecrosis, hemolysis, increased vascular permeability, edema, inflammatory response, and platelet aggregation. In Loxosceles arizonica (Arizona brown spider), this protein is Dermonecrotic toxin LarSicTox-alphaIB1c.